The primary structure comprises 99 residues: Transcriptional repressor PagR (99 aa).

The region spanning 9–99 is the HTH arsR-type domain; sequence IEYMSLEDDA…GIIKLLNPIQ (91 aa). The segment at residues 43–62 is a DNA-binding region (H-T-H motif); that stretch reads NVTQIIQILKLPQSTVSQHL.

Represses the expression of the pagA and atxA genes. The polypeptide is Transcriptional repressor PagR (pagR) (Bacillus anthracis).